A 314-amino-acid chain; its full sequence is Dihydropteroate synthase (314 aa).

Positions 10 to 294 (TVICGIINVT…DVASHRMAVE (285 aa)) constitute a Pterin-binding domain. Asn-17 serves as a coordination point for Mg(2+). (7,8-dihydropterin-6-yl)methyl diphosphate contacts are provided by residues Asp-91, Asn-110, Asp-201, Lys-237, and 282–284 (RVH).

It belongs to the DHPS family. As to quaternary structure, homodimer. Mg(2+) is required as a cofactor.

The enzyme catalyses (7,8-dihydropterin-6-yl)methyl diphosphate + 4-aminobenzoate = 7,8-dihydropteroate + diphosphate. Its pathway is cofactor biosynthesis; tetrahydrofolate biosynthesis; 7,8-dihydrofolate from 2-amino-4-hydroxy-6-hydroxymethyl-7,8-dihydropteridine diphosphate and 4-aminobenzoate: step 1/2. With respect to regulation, is potently inhibited by sulfonamides, with Ki values between 25 nM and 850 nM. Functionally, catalyzes the condensation of para-aminobenzoate (pABA) with 6-hydroxymethyl-7,8-dihydropterin diphosphate (DHPt-PP) to form 7,8-dihydropteroate, the immediate precursor of folate derivatives. Is the target for the sulfonamide group of antimicrobial drugs. Sulfonamide drugs act as pABA analogs, they inhibit the reaction by acting as alternative substrates, leading to a 'dead end' sulfa-pterin product. This Streptococcus pneumoniae (strain ATCC BAA-255 / R6) protein is Dihydropteroate synthase (sulA).